We begin with the raw amino-acid sequence, 853 residues long: Trimethylguanosine synthase (853 aa).

The disordered stretch occupies residues 54–84; the sequence is NNAGDQGTEEEEDGHSNGTAESHSPNESDLD. Thr61 bears the Phosphothreonine mark. Polar residues predominate over residues 69–80; it reads SNGTAESHSPNE. A phosphoserine mark is found at Ser81, Ser85, Ser92, and Ser139. Tyr144 carries the phosphotyrosine modification. Residue Ser152 is modified to Phosphoserine. 2 disordered regions span residues 328–437 and 523–549; these read VEQS…DDNG and ETSQ…QDMS. A compositionally biased stretch (basic and acidic residues) spans 365-383; the sequence is KENDISENRSSDQPAKELQ. Ser405 and Ser431 each carry phosphoserine. The segment covering 424–435 has biased composition (acidic residues); the sequence is DVDENPDSEVDD. Polar residues predominate over residues 526–541; the sequence is QDSLSQNKMQDTCTSS. Position 572 is a phosphoserine (Ser572). The disordered stretch occupies residues 594–623; the sequence is CSTEEIPNSPHAETEVEIKKKKKKNKNKKI. A compositionally biased stretch (basic residues) spans 612-621; sequence KKKKKKNKNK. Residue Asp711 coordinates S-adenosyl-L-methionine.

Belongs to the methyltransferase superfamily. Trimethylguanosine synthase family. In terms of assembly, may form homooligomers. Interacts with CREBBP/CBP, EED/WAIT1, EP300/P300, NCOA6/PRIP, PPARBP/PBP and SMN. Ubiquitously expressed.

The protein resides in the cytoplasm. It is found in the nucleus. Its subcellular location is the cajal body. It localises to the nucleolus. It catalyses the reaction a 5'-end (N(7)-methyl 5'-triphosphoguanosine)-ribonucleoside in snRNA + S-adenosyl-L-methionine = a 5'-end (N(2),N(7)-dimethyl 5'-triphosphoguanosine)-ribonucleoside in snRNA + S-adenosyl-L-homocysteine + H(+). It carries out the reaction a 5'-end (N(7)-methyl 5'-triphosphoguanosine)-ribonucleoside in snoRNA + S-adenosyl-L-methionine = a 5'-end (N(2),N(7)-dimethyl 5'-triphosphoguanosine)-ribonucleoside in snoRNA + S-adenosyl-L-homocysteine + H(+). The enzyme catalyses a 5'-end (N(2),N(7)-dimethyl 5'-triphosphoguanosine)-ribonucleoside in snRNA + S-adenosyl-L-methionine = a 5'-end (N(2),N(2),N(7)-trimethyl 5'-triphosphoguanosine)-ribonucleoside in snRNA + S-adenosyl-L-homocysteine + H(+). The catalysed reaction is a 5'-end (N(2),N(7)-dimethyl 5'-triphosphoguanosine)-ribonucleoside in snoRNA + S-adenosyl-L-methionine = a 5'-end (N(2),N(2),N(7)-trimethyl 5'-triphosphoguanosine)-ribonucleoside in snoRNA + S-adenosyl-L-homocysteine + H(+). Functionally, catalyzes the 2 serial methylation steps for the conversion of the 7-monomethylguanosine (m(7)G) caps of snRNAs and snoRNAs to a 2,2,7-trimethylguanosine (m(2,2,7)G) cap structure. The enzyme is specific for guanine, and N7 methylation must precede N2 methylation. Hypermethylation of the m7G cap of U snRNAs leads to their concentration in nuclear foci, their colocalization with coilin and the formation of canonical Cajal bodies (CBs). Plays a role in transcriptional regulation. The polypeptide is Trimethylguanosine synthase (Tgs1) (Mus musculus (Mouse)).